Consider the following 189-residue polypeptide: Probable nicotinate-nucleotide adenylyltransferase (189 aa).

The protein belongs to the NadD family.

The catalysed reaction is nicotinate beta-D-ribonucleotide + ATP + H(+) = deamido-NAD(+) + diphosphate. It participates in cofactor biosynthesis; NAD(+) biosynthesis; deamido-NAD(+) from nicotinate D-ribonucleotide: step 1/1. Catalyzes the reversible adenylation of nicotinate mononucleotide (NaMN) to nicotinic acid adenine dinucleotide (NaAD). The chain is Probable nicotinate-nucleotide adenylyltransferase from Cereibacter sphaeroides (strain ATCC 17023 / DSM 158 / JCM 6121 / CCUG 31486 / LMG 2827 / NBRC 12203 / NCIMB 8253 / ATH 2.4.1.) (Rhodobacter sphaeroides).